A 356-amino-acid polypeptide reads, in one-letter code: Histidine biosynthesis bifunctional protein HisB (356 aa).

Positions 1–166 (MSKKVLFIDR…AICNYLTSLN (166 aa)) are histidinol-phosphatase. Asp-9 acts as the Nucleophile in catalysis. Residues Asp-9 and Asp-11 each coordinate Mg(2+). The active-site Proton donor is Asp-11. Positions 93, 95, 101, and 103 each coordinate Zn(2+). A Mg(2+)-binding site is contributed by Asp-130. The interval 167–356 (RYAHVKRITK…VLPSSKGVLS (190 aa)) is imidazoleglycerol-phosphate dehydratase.

This sequence in the N-terminal section; belongs to the histidinol-phosphatase family. The protein in the C-terminal section; belongs to the imidazoleglycerol-phosphate dehydratase family. It depends on Mg(2+) as a cofactor. Zn(2+) is required as a cofactor.

The protein resides in the cytoplasm. It catalyses the reaction D-erythro-1-(imidazol-4-yl)glycerol 3-phosphate = 3-(imidazol-4-yl)-2-oxopropyl phosphate + H2O. The catalysed reaction is L-histidinol phosphate + H2O = L-histidinol + phosphate. It functions in the pathway amino-acid biosynthesis; L-histidine biosynthesis; L-histidine from 5-phospho-alpha-D-ribose 1-diphosphate: step 6/9. Its pathway is amino-acid biosynthesis; L-histidine biosynthesis; L-histidine from 5-phospho-alpha-D-ribose 1-diphosphate: step 8/9. This is Histidine biosynthesis bifunctional protein HisB from Baumannia cicadellinicola subsp. Homalodisca coagulata.